Reading from the N-terminus, the 342-residue chain is Heparan sulfate glucosamine 3-O-sulfotransferase 6 (342 aa).

Residues M1–Q21 form a disordered region. Over M1–P31 the chain is Cytoplasmic. A helical; Signal-anchor for type II membrane protein membrane pass occupies residues M32 to G49. Residues R50–G342 are Lumenal-facing. The interval A55–P85 is disordered. The segment covering E66–P85 has biased composition (low complexity). A 3'-phosphoadenylyl sulfate-binding site is contributed by K100–R104. Substrate-binding positions include E122 to R128 and K153 to S156. Residues R181 and S189 each contribute to the 3'-phosphoadenylyl sulfate site. Residue W220 to S221 coordinates substrate. N281 carries an N-linked (GlcNAc...) asparagine glycan. C288 and C300 are joined by a disulfide. 3'-phosphoadenylyl sulfate is bound at residue K305–H309.

Belongs to the sulfotransferase 1 family.

It is found in the golgi apparatus membrane. It carries out the reaction alpha-D-glucosaminyl-[heparan sulfate](n) + 3'-phosphoadenylyl sulfate = 3-sulfo-alpha-D-glucosaminyl-[heparan sulfate](n) + adenosine 3',5'-bisphosphate + H(+). Its function is as follows. Sulfotransferase that utilizes 3'-phospho-5'-adenylyl sulfate (PAPS) to catalyze the transfer of a sulfo group to heparan sulfate. The substrate-specific O-sulfation generates an enzyme-modified heparan sulfate which acts as a binding receptor to Herpes Simplex Virus-1 (HSV-1) and permits its entry. Unlike 3-OST-1, does not convert non-anticoagulant heparan sulfate to anticoagulant heparan sulfate. The protein is Heparan sulfate glucosamine 3-O-sulfotransferase 6 (HS3ST6) of Homo sapiens (Human).